The following is an 89-amino-acid chain: Large ribosomal subunit protein bL31B (89 aa).

The disordered stretch occupies residues 70 to 89; sequence RVQRFESRRRRRQQQSGEQG.

The protein belongs to the bacterial ribosomal protein bL31 family. Type B subfamily. Part of the 50S ribosomal subunit.

The sequence is that of Large ribosomal subunit protein bL31B from Rubrobacter xylanophilus (strain DSM 9941 / JCM 11954 / NBRC 16129 / PRD-1).